We begin with the raw amino-acid sequence, 296 residues long: Phosphatidylglycerol--prolipoprotein diacylglyceryl transferase (296 aa).

The next 4 helical transmembrane spans lie at 10–30 (IAFS…LAAF), 57–77 (LLFY…MLFY), 92–112 (VWEG…ACWL), and 119–139 (LHFF…LGFG). Arginine 140 contributes to the a 1,2-diacyl-sn-glycero-3-phospho-(1'-sn-glycerol) binding site. Transmembrane regions (helical) follow at residues 194–214 (QLYE…TFSM), 220–240 (YAVS…VEFV), and 254–274 (WLTM…VLLA).

It belongs to the Lgt family.

It is found in the cell inner membrane. It carries out the reaction L-cysteinyl-[prolipoprotein] + a 1,2-diacyl-sn-glycero-3-phospho-(1'-sn-glycerol) = an S-1,2-diacyl-sn-glyceryl-L-cysteinyl-[prolipoprotein] + sn-glycerol 1-phosphate + H(+). Its pathway is protein modification; lipoprotein biosynthesis (diacylglyceryl transfer). Functionally, catalyzes the transfer of the diacylglyceryl group from phosphatidylglycerol to the sulfhydryl group of the N-terminal cysteine of a prolipoprotein, the first step in the formation of mature lipoproteins. The polypeptide is Phosphatidylglycerol--prolipoprotein diacylglyceryl transferase (Xanthomonas euvesicatoria pv. vesicatoria (strain 85-10) (Xanthomonas campestris pv. vesicatoria)).